A 96-amino-acid chain; its full sequence is Keratin-associated protein 12-1 (96 aa).

14 tandem repeats follow at residues 10-14 (CQPAC), 15-19 (CAPSP), 24-28 (CYIPV), 30-34 (CQSSV), 35-39 (CVPVS), 45-49 (CVPVR), 50-54 (CQSSV), 55-59 (CVPVS), 60-64 (CRPVV), 70-74 (CQSSG), 75-79 (CCQPS), 80-84 (CTSVL), 85-89 (CRPIS), and 90-94 (CSTPS). A 14 X 5 AA approximate repeats region spans residues 10-94 (CQPACCAPSP…CRPISCSTPS (85 aa)).

This sequence belongs to the KRTAP type 12 family. Interacts with hair keratins. Restricted to a narrow region of the hair fiber cuticle, lying approximately 20 cell layers above the apex of the dermal papilla of the hair root; not detected in any other tissues.

In the hair cortex, hair keratin intermediate filaments are embedded in an interfilamentous matrix, consisting of hair keratin-associated proteins (KRTAP), which are essential for the formation of a rigid and resistant hair shaft through their extensive disulfide bond cross-linking with abundant cysteine residues of hair keratins. The matrix proteins include the high-sulfur and high-glycine-tyrosine keratins. The protein is Keratin-associated protein 12-1 (KRTAP12-1) of Homo sapiens (Human).